Consider the following 252-residue polypeptide: 3-dehydroquinate dehydratase (252 aa).

Residues Ser21, 46–48 (EWR), and Arg82 each bind 3-dehydroquinate. His143 functions as the Proton donor/acceptor in the catalytic mechanism. Lys170 functions as the Schiff-base intermediate with substrate in the catalytic mechanism. Positions 213, 232, and 236 each coordinate 3-dehydroquinate.

The protein belongs to the type-I 3-dehydroquinase family. As to quaternary structure, homodimer.

It catalyses the reaction 3-dehydroquinate = 3-dehydroshikimate + H2O. It participates in metabolic intermediate biosynthesis; chorismate biosynthesis; chorismate from D-erythrose 4-phosphate and phosphoenolpyruvate: step 3/7. With respect to regulation, inhibited by (2R)-2-methyl-3-dehydroquinic acid. In terms of biological role, involved in the third step of the chorismate pathway, which leads to the biosynthesis of aromatic amino acids. Catalyzes the cis-dehydration of 3-dehydroquinate (DHQ) and introduces the first double bond of the aromatic ring to yield 3-dehydroshikimate. The reaction involves the formation of an imine intermediate between the keto group of 3-dehydroquinate and the epsilon-amino group of a Lys-170 at the active site. This is 3-dehydroquinate dehydratase from Salmonella typhimurium (strain LT2 / SGSC1412 / ATCC 700720).